A 388-amino-acid polypeptide reads, in one-letter code: Chaperone protein DnaJ (388 aa).

Residues 6–71 (DYYEILGVPR…EKRKLYDQFG (66 aa)) enclose the J domain. The segment at 147–229 (GCEKEIPIYR…CGGTGNVRRQ (83 aa)) adopts a CR-type zinc-finger fold. The Zn(2+) site is built by cysteine 160, cysteine 163, cysteine 177, cysteine 180, cysteine 203, cysteine 206, cysteine 217, and cysteine 220. CXXCXGXG motif repeat units follow at residues 160-167 (CSVCGGSG), 177-184 (CQKCGGTG), 203-210 (CDACGGTG), and 217-224 (CRECGGTG).

It belongs to the DnaJ family. As to quaternary structure, homodimer. Requires Zn(2+) as cofactor.

Its subcellular location is the cytoplasm. Participates actively in the response to hyperosmotic and heat shock by preventing the aggregation of stress-denatured proteins and by disaggregating proteins, also in an autonomous, DnaK-independent fashion. Unfolded proteins bind initially to DnaJ; upon interaction with the DnaJ-bound protein, DnaK hydrolyzes its bound ATP, resulting in the formation of a stable complex. GrpE releases ADP from DnaK; ATP binding to DnaK triggers the release of the substrate protein, thus completing the reaction cycle. Several rounds of ATP-dependent interactions between DnaJ, DnaK and GrpE are required for fully efficient folding. Also involved, together with DnaK and GrpE, in the DNA replication of plasmids through activation of initiation proteins. In Caldicellulosiruptor bescii (strain ATCC BAA-1888 / DSM 6725 / KCTC 15123 / Z-1320) (Anaerocellum thermophilum), this protein is Chaperone protein DnaJ.